The primary structure comprises 347 residues: Transcription elongation factor A protein 3 (347 aa).

The region spanning 5–82 (EELLRIAKKL…KNWKRLLDSP (78 aa)) is the TFIIS N-terminal domain. The span at 83-100 (RTTKGEREEREKAKKEKG) shows a compositional bias: basic and acidic residues. A disordered region spans residues 83–168 (RTTKGEREER…TTPSSPSTPT (86 aa)). A Phosphoserine modification is found at Ser-113. Basic and acidic residues predominate over residues 119–131 (GGGEPKTRRDSVD). Low complexity-rich tracts occupy residues 132–142 (SRSSTTSSPKR) and 157–168 (TPTTPSSPSTPT). Ser-139 bears the Phosphoserine mark. Residues 186-302 (VRDKCVEMLS…EHQMAKTGGT (117 aa)) enclose the TFIIS central domain. The TFIIS-type zinc finger occupies 305–345 (DLLRCSKCKKKNCTYNQVQTRSADEPMTTFVLCNECGNRWK). Zn(2+)-binding residues include Cys-309, Cys-312, Cys-337, and Cys-340.

Belongs to the TFS-II family. As to expression, liver, kidney and heart.

It is found in the nucleus. Its function is as follows. Necessary for efficient RNA polymerase II transcription elongation past template-encoded arresting sites. The arresting sites in DNA have the property of trapping a certain fraction of elongating RNA polymerases that pass through, resulting in locked ternary complexes. Cleavage of the nascent transcript by S-II allows the resumption of elongation from the new 3'-terminus. This is Transcription elongation factor A protein 3 (Tcea3) from Mus musculus (Mouse).